The chain runs to 1276 residues: cGMP-specific 3',5'-cyclic phosphodiesterase (1276 aa).

Disordered stretches follow at residues 1 to 76, 91 to 185, and 241 to 260; these read MHEL…TAAG, NQVK…QQDV, and ASPTVQQKSPRSLSNSSASS. Low complexity-rich tracts occupy residues 12-47 and 57-76; these read SSSSSSSSSSNMTDVSAAAGGATAPAETAATSSSAS and TSTAMAAPTTTPTTAATAAG. Positions 109–124 are enriched in pro residues; sequence APYPPVPAAKPKPTPT. Positions 129–140 are enriched in basic and acidic residues; that stretch reads SKFKSTSREVDV. Over residues 147–166 the composition is skewed to polar residues; it reads ARSSTISPGVSIHTQTIQQE. Composition is skewed to low complexity over residues 167 to 180 and 249 to 260; these read SSSAKPGMSSSSSS and SPRSLSNSSASS. 2 consecutive GAF domains span residues 290–442 and 474–658; these read DIDV…GIGI and NLEC…GLGI. The region spanning 688 to 1119 is the PDEase domain; the sequence is SQDQTEKLTQ…RNWQDLAEKV (432 aa). His764 serves as the catalytic Proton donor. Residues His768, His804, Asp805, and Asp1023 each coordinate a divalent metal cation. Disordered stretches follow at residues 1162 to 1193 and 1205 to 1276; these read AQHGAGAGGDDSHTPEHQRSGSRLSMKKTGAL and LYNS…CSLL. 2 stretches are compositionally biased toward basic and acidic residues: residues 1171–1180 and 1221–1233; these read DDSHTPEHQR and LESHVSEDMDDKS. The segment covering 1248–1263 has biased composition (low complexity); it reads GRMSASSSTSSAGTVV. Positions 1266–1276 are enriched in basic residues; that stretch reads SKKRSKLCSLL. Cys1273 is subject to Cysteine methyl ester. Cys1273 is lipidated: S-farnesyl cysteine. Residues 1274 to 1276 constitute a propeptide, removed in mature form; the sequence is SLL.

This sequence belongs to the cyclic nucleotide phosphodiesterase family. In terms of assembly, interacts with PrBP. The cofactor is a divalent metal cation.

It localises to the cell membrane. The enzyme catalyses 3',5'-cyclic GMP + H2O = GMP + H(+). Has a role regulating cGMP transport in Malpighian tubule principal cells. The chain is cGMP-specific 3',5'-cyclic phosphodiesterase from Drosophila persimilis (Fruit fly).